A 346-amino-acid polypeptide reads, in one-letter code: 3 beta-hydroxysteroid dehydrogenase/Delta 5--&gt;4-isomerase (346 aa).

Tyr-147 functions as the Proton acceptor in the catalytic mechanism. Lys-151 provides a ligand contact to NAD(+).

It belongs to the 3-beta-HSD family.

It carries out the reaction a 3beta-hydroxy-Delta(5)-steroid + NAD(+) = a 3-oxo-Delta(5)-steroid + NADH + H(+). The enzyme catalyses a 3-oxo-Delta(5)-steroid = a 3-oxo-Delta(4)-steroid. It functions in the pathway lipid metabolism; steroid biosynthesis. In terms of biological role, catalyzes the oxidative conversion of Delta(5)-ene-3-beta-hydroxy steroid, and the oxidative conversion of ketosteroids. The 3-beta-HSD enzymatic system plays a crucial role in the biosynthesis of all classes of hormonal steroids. During viral infection, steroid production contributes to virulence by inhibiting the host inflammatory response. This is 3 beta-hydroxysteroid dehydrogenase/Delta 5--&gt;4-isomerase (OPG174) from Vaccinia virus (strain Western Reserve) (VACV).